A 256-amino-acid chain; its full sequence is Imidazole glycerol phosphate synthase subunit HisF (256 aa).

Active-site residues include aspartate 12 and aspartate 131.

The protein belongs to the HisA/HisF family. As to quaternary structure, heterodimer of HisH and HisF.

The protein resides in the cytoplasm. It catalyses the reaction 5-[(5-phospho-1-deoxy-D-ribulos-1-ylimino)methylamino]-1-(5-phospho-beta-D-ribosyl)imidazole-4-carboxamide + L-glutamine = D-erythro-1-(imidazol-4-yl)glycerol 3-phosphate + 5-amino-1-(5-phospho-beta-D-ribosyl)imidazole-4-carboxamide + L-glutamate + H(+). The protein operates within amino-acid biosynthesis; L-histidine biosynthesis; L-histidine from 5-phospho-alpha-D-ribose 1-diphosphate: step 5/9. Functionally, IGPS catalyzes the conversion of PRFAR and glutamine to IGP, AICAR and glutamate. The HisF subunit catalyzes the cyclization activity that produces IGP and AICAR from PRFAR using the ammonia provided by the HisH subunit. The polypeptide is Imidazole glycerol phosphate synthase subunit HisF (Pseudomonas putida (strain GB-1)).